A 103-amino-acid chain; its full sequence is Large ribosomal subunit protein bL21 (103 aa).

This sequence belongs to the bacterial ribosomal protein bL21 family. As to quaternary structure, part of the 50S ribosomal subunit. Contacts protein L20.

Its function is as follows. This protein binds to 23S rRNA in the presence of protein L20. This chain is Large ribosomal subunit protein bL21, found in Vibrio parahaemolyticus serotype O3:K6 (strain RIMD 2210633).